Reading from the N-terminus, the 125-residue chain is Phosphoribosyl-AMP cyclohydrolase (125 aa).

Asp74 provides a ligand contact to Mg(2+). Cys75 serves as a coordination point for Zn(2+). Mg(2+) is bound by residues Asp76 and Asp78. Zn(2+) contacts are provided by Cys92 and Cys99.

Belongs to the PRA-CH family. As to quaternary structure, homodimer. It depends on Mg(2+) as a cofactor. Requires Zn(2+) as cofactor.

It localises to the cytoplasm. The catalysed reaction is 1-(5-phospho-beta-D-ribosyl)-5'-AMP + H2O = 1-(5-phospho-beta-D-ribosyl)-5-[(5-phospho-beta-D-ribosylamino)methylideneamino]imidazole-4-carboxamide. The protein operates within amino-acid biosynthesis; L-histidine biosynthesis; L-histidine from 5-phospho-alpha-D-ribose 1-diphosphate: step 3/9. Catalyzes the hydrolysis of the adenine ring of phosphoribosyl-AMP. In Geotalea uraniireducens (strain Rf4) (Geobacter uraniireducens), this protein is Phosphoribosyl-AMP cyclohydrolase.